We begin with the raw amino-acid sequence, 333 residues long: Ketol-acid reductoisomerase (NADP(+)) (333 aa).

Residues 2-182 (ANIYYDSDCD…GGGRAGILET (181 aa)) enclose the KARI N-terminal Rossmann domain. NADP(+) is bound by residues 25–28 (YGSQ), lysine 48, serine 51, serine 53, and 83–86 (DTIQ). Histidine 108 is an active-site residue. Glycine 134 is a binding site for NADP(+). The region spanning 183–331 (SFREETETDL…KKLRSMMKWL (149 aa)) is the KARI C-terminal knotted domain. Mg(2+) contacts are provided by aspartate 191, glutamate 195, glutamate 227, and glutamate 231. Serine 252 is a substrate binding site.

The protein belongs to the ketol-acid reductoisomerase family. Mg(2+) serves as cofactor.

The enzyme catalyses (2R)-2,3-dihydroxy-3-methylbutanoate + NADP(+) = (2S)-2-acetolactate + NADPH + H(+). It carries out the reaction (2R,3R)-2,3-dihydroxy-3-methylpentanoate + NADP(+) = (S)-2-ethyl-2-hydroxy-3-oxobutanoate + NADPH + H(+). It participates in amino-acid biosynthesis; L-isoleucine biosynthesis; L-isoleucine from 2-oxobutanoate: step 2/4. Its pathway is amino-acid biosynthesis; L-valine biosynthesis; L-valine from pyruvate: step 2/4. Functionally, involved in the biosynthesis of branched-chain amino acids (BCAA). Catalyzes an alkyl-migration followed by a ketol-acid reduction of (S)-2-acetolactate (S2AL) to yield (R)-2,3-dihydroxy-isovalerate. In the isomerase reaction, S2AL is rearranged via a Mg-dependent methyl migration to produce 3-hydroxy-3-methyl-2-ketobutyrate (HMKB). In the reductase reaction, this 2-ketoacid undergoes a metal-dependent reduction by NADPH to yield (R)-2,3-dihydroxy-isovalerate. This Leptospira interrogans serogroup Icterohaemorrhagiae serovar copenhageni (strain Fiocruz L1-130) protein is Ketol-acid reductoisomerase (NADP(+)).